The primary structure comprises 258 residues: MLAKRIIPCLDVRDGQVVKGVQFRNHEIIGDIVPLAQHYAQEGADELVFYDITASSDGRTVDKSWVERIAQVIDIPFCVAGGIKTIEDAEKLFAFGADKISINSPALADPTLISRLADRFGVQAIVVGIDSWFEQETGKYWVNQYTGDETRTRQTHWQLLDWVKEVQQCGAGEIVLNMMNQDGLRNGYDLAQLKLVRGVCRVPLIASGGAGKMVHFRDAFIEAKVDGALAASVFHKQIIEIGELKSYLVKSAIEIRSE.

Residues Asp11 and Asp130 contribute to the active site.

This sequence belongs to the HisA/HisF family. In terms of assembly, heterodimer of HisH and HisF.

It is found in the cytoplasm. It carries out the reaction 5-[(5-phospho-1-deoxy-D-ribulos-1-ylimino)methylamino]-1-(5-phospho-beta-D-ribosyl)imidazole-4-carboxamide + L-glutamine = D-erythro-1-(imidazol-4-yl)glycerol 3-phosphate + 5-amino-1-(5-phospho-beta-D-ribosyl)imidazole-4-carboxamide + L-glutamate + H(+). Its pathway is amino-acid biosynthesis; L-histidine biosynthesis; L-histidine from 5-phospho-alpha-D-ribose 1-diphosphate: step 5/9. IGPS catalyzes the conversion of PRFAR and glutamine to IGP, AICAR and glutamate. The HisF subunit catalyzes the cyclization activity that produces IGP and AICAR from PRFAR using the ammonia provided by the HisH subunit. The protein is Imidazole glycerol phosphate synthase subunit HisF of Haemophilus influenzae (strain PittEE).